Here is a 768-residue protein sequence, read N- to C-terminus: DNA replication licensing factor MCM3 homolog 3 (768 aa).

The MCM domain maps to 290–497 (TFDLLGNSLA…IDRQISEHVA (208 aa)). 340–347 (GDPSVAKS) contributes to the ATP binding site. The Arginine finger motif lies at 472–475 (SRFD). The segment covering 661-670 (EMKQQADHDA) has biased composition (basic and acidic residues). The tract at residues 661-690 (EMKQQADHDAGATGGTVDGHGSSGNDPMDV) is disordered. The segment covering 672–682 (ATGGTVDGHGS) has biased composition (gly residues).

Belongs to the MCM family.

The protein localises to the nucleus. The catalysed reaction is ATP + H2O = ADP + phosphate + H(+). Its function is as follows. Acts as a factor that allows the DNA to undergo a single round of replication per cell cycle. Required for DNA replication and cell proliferation. May act as a component of the MCM complex which is the putative replicative helicase of the replication licensing system in eukaryotic cells. This is DNA replication licensing factor MCM3 homolog 3 (ROA3) from Zea mays (Maize).